A 470-amino-acid polypeptide reads, in one-letter code: Putative gustatory receptor 28b (470 aa).

The Cytoplasmic segment spans residues 1-76 (MDIEMAKEPV…KTGKKAIKKT (76 aa)). Residues 77-97 (IFGYINGIMHIAMFVFAYSLT) traverse the membrane as a helical segment. Topologically, residues 98-119 (IYNNCESVASYFFRSRITYFGD) are extracellular. A helical membrane pass occupies residues 120 to 140 (LMQIVSGFIGVTVIYLTAFVP). Residues 141–175 (NHRLERCLQKFHTMDVQLQTVGVKIMYSKVLRFSY) lie on the Cytoplasmic side of the membrane. The helical transmembrane segment at 176 to 196 (MVLISMFLVNVLFTGGTFSVL) threads the bilayer. At 197 to 204 (YSSEVAPT) the chain is on the extracellular side. Residues 205–225 (MALHFTFLIQHTVIAIAIALF) traverse the membrane as a helical segment. Topologically, residues 226–309 (SCFTYLVEMR…ATANKYFTYQ (84 aa)) are cytoplasmic. The helical transmembrane segment at 310-330 (LLTIISIAFLIIVFDAYYVLE) threads the bilayer. Topologically, residues 331-346 (TLLGKSKRESKFKTVE) are extracellular. A helical transmembrane segment spans residues 347–367 (FVTFFSCQMILYLIAIISIVE). Topologically, residues 368–423 (GSNRAIKKSEKTGGIVHSLLNKTKSAEVKEKLQQFSMQLMHLKINFTAAGLFNIDR) are cytoplasmic. The chain crosses the membrane as a helical span at residues 424-444 (TLYFTISGALTTYLIILLQFT). Residues 445–470 (SNSPNNGYGNGSSCCETFNNMTNHTL) lie on the Extracellular side of the membrane. 3 N-linked (GlcNAc...) asparagine glycosylation sites follow: asparagine 454, asparagine 464, and asparagine 467.

Belongs to the insect chemoreceptor superfamily. Gustatory receptor (GR) family. Gr66a subfamily. In terms of tissue distribution, isoforms A and E have taste neuron-specific expression restricted to the labial palps, the internal taste organs in the pharynx, and the legs. In addition to expression in a large number of taste neurons, isoform A is also expressed in a few nonchemosensory neurons, including the campaniform sensilla of the wing, leg stretch receptors, and multiple dendritic neurons in the abdomen. Isoform B is the only receptor not expressed in gustatory receptor neurons in the labellum. We observe expression of this receptor in a single large cell at the base of each maxillary palp, in campaniform sensilla of the wing, and multiple dendritic neurons in the abdomen. Isoform C is expressed by many gustatory receptor neurons in the labial palps, the pharyngeal taste clusters, and taste neurons in the legs. In addition, isoform C expressed in a single cell at the base of the maxillary palps, neurons in the Johnston's organ (JO), campaniform sensilla of the wing, stretch receptors and the femoral chordotonal organ of the legs, and multiple dendritic neurons in the abdomen. Isoform D is expressed in a small number of gustatory receptor neurons in the labial palps, the ventral cibarial sense organ (VCSO), and legs. Atypical expression is observed in three neurons in the arista, campaniform sensilla of the wing, stretch and femoral chordotonal organ receptors in the legs, and multiple dendritic neurons in the abdomen. In larvae, Isoform A is expressed in neurons of the terminal external chemosensory organ and the dorsal external chemosensory organ; and isoform E is expressed in neurons of the terminal external chemosensory organ.

The protein localises to the cell membrane. Functionally, probable gustatory receptor which mediates acceptance or avoidance behavior, depending on its substrates. Atypical expression also suggests nongustatory roles in the nervous system and tissues involved in proprioception, hygroreception, and other sensory modalities. It is also possible that it has chemosensory roles in the detection of internal ligands. In Drosophila melanogaster (Fruit fly), this protein is Putative gustatory receptor 28b (Gr28b).